A 1187-amino-acid chain; its full sequence is DNA-directed RNA polymerase subunit beta (1187 aa).

A disordered region spans residues 1150 to 1187 (KDEDDDPASSADDLGFNIGARPDAAAKEDQKAEEPEYQ). Residues 1173-1187 (AAAKEDQKAEEPEYQ) are compositionally biased toward basic and acidic residues.

It belongs to the RNA polymerase beta chain family. The RNAP catalytic core consists of 2 alpha, 1 beta, 1 beta' and 1 omega subunit. When a sigma factor is associated with the core the holoenzyme is formed, which can initiate transcription.

The enzyme catalyses RNA(n) + a ribonucleoside 5'-triphosphate = RNA(n+1) + diphosphate. Functionally, DNA-dependent RNA polymerase catalyzes the transcription of DNA into RNA using the four ribonucleoside triphosphates as substrates. This chain is DNA-directed RNA polymerase subunit beta, found in Bifidobacterium longum (strain NCC 2705).